The chain runs to 244 residues: UPF0246 protein SGO_1307 (244 aa).

The protein belongs to the UPF0246 family.

This Streptococcus gordonii (strain Challis / ATCC 35105 / BCRC 15272 / CH1 / DL1 / V288) protein is UPF0246 protein SGO_1307.